The following is a 204-amino-acid chain: dITP/XTP pyrophosphatase (204 aa).

14–19 (THNKGK) is a substrate binding site. Glu46 and Asp75 together coordinate Mg(2+). Residue Asp75 is the Proton acceptor of the active site. Residues Ser76, 161 to 164 (FGYD), Lys184, and 189 to 190 (HR) contribute to the substrate site.

This sequence belongs to the HAM1 NTPase family. In terms of assembly, homodimer. Requires Mg(2+) as cofactor.

It catalyses the reaction XTP + H2O = XMP + diphosphate + H(+). The enzyme catalyses dITP + H2O = dIMP + diphosphate + H(+). The catalysed reaction is ITP + H2O = IMP + diphosphate + H(+). In terms of biological role, pyrophosphatase that catalyzes the hydrolysis of nucleoside triphosphates to their monophosphate derivatives, with a high preference for the non-canonical purine nucleotides XTP (xanthosine triphosphate), dITP (deoxyinosine triphosphate) and ITP. Seems to function as a house-cleaning enzyme that removes non-canonical purine nucleotides from the nucleotide pool, thus preventing their incorporation into DNA/RNA and avoiding chromosomal lesions. The chain is dITP/XTP pyrophosphatase from Ruegeria pomeroyi (strain ATCC 700808 / DSM 15171 / DSS-3) (Silicibacter pomeroyi).